Consider the following 299-residue polypeptide: ATP synthase gamma chain (299 aa).

The protein belongs to the ATPase gamma chain family. As to quaternary structure, F-type ATPases have 2 components, CF(1) - the catalytic core - and CF(0) - the membrane proton channel. CF(1) has five subunits: alpha(3), beta(3), gamma(1), delta(1), epsilon(1). CF(0) has three main subunits: a, b and c.

It is found in the cell membrane. Functionally, produces ATP from ADP in the presence of a proton gradient across the membrane. The gamma chain is believed to be important in regulating ATPase activity and the flow of protons through the CF(0) complex. This Clavibacter michiganensis subsp. michiganensis (strain NCPPB 382) protein is ATP synthase gamma chain.